The sequence spans 39 residues: Photosystem II reaction center protein L (39 aa).

The chain crosses the membrane as a helical span at residues 18–38 (SLYWGLLLIFVLAVLFSNYFF).

It belongs to the PsbL family. As to quaternary structure, PSII is composed of 1 copy each of membrane proteins PsbA, PsbB, PsbC, PsbD, PsbE, PsbF, PsbH, PsbI, PsbJ, PsbK, PsbL, PsbM, PsbT, PsbX, PsbY, PsbZ, Psb30/Ycf12, at least 3 peripheral proteins of the oxygen-evolving complex and a large number of cofactors. It forms dimeric complexes.

The protein localises to the plastid thylakoid membrane. Functionally, one of the components of the core complex of photosystem II (PSII). PSII is a light-driven water:plastoquinone oxidoreductase that uses light energy to abstract electrons from H(2)O, generating O(2) and a proton gradient subsequently used for ATP formation. It consists of a core antenna complex that captures photons, and an electron transfer chain that converts photonic excitation into a charge separation. This subunit is found at the monomer-monomer interface and is required for correct PSII assembly and/or dimerization. The chain is Photosystem II reaction center protein L from Cuscuta gronovii (Common dodder).